Here is a 227-residue protein sequence, read N- to C-terminus: Small ribosomal subunit protein uS5 (227 aa).

The tract at residues 1-22 is disordered; the sequence is MSKRSNRSNNKNNTNKFNIENW. The span at 7-18 shows a compositional bias: low complexity; the sequence is RSNNKNNTNKFN. Positions 63-126 constitute an S5 DRBM domain; it reads LEEEVMDVNL…DAAKYNLIKV (64 aa).

Belongs to the universal ribosomal protein uS5 family. As to quaternary structure, part of the 30S ribosomal subunit. Contacts protein S4.

In terms of biological role, with S4 and S12 plays an important role in translational accuracy. This is Small ribosomal subunit protein uS5 from Methanosphaera stadtmanae (strain ATCC 43021 / DSM 3091 / JCM 11832 / MCB-3).